We begin with the raw amino-acid sequence, 203 residues long: Outer-membrane lipoprotein LolB (203 aa).

The N-terminal stretch at 1–22 is a signal peptide; the sequence is MPVNLNHTLLLCLLVAASLLSG. Cys23 is lipidated: N-palmitoyl cysteine. Cys23 carries the S-diacylglycerol cysteine lipid modification.

The protein belongs to the LolB family. Monomer.

It localises to the cell outer membrane. Its function is as follows. Plays a critical role in the incorporation of lipoproteins in the outer membrane after they are released by the LolA protein. The chain is Outer-membrane lipoprotein LolB from Shewanella denitrificans (strain OS217 / ATCC BAA-1090 / DSM 15013).